A 157-amino-acid polypeptide reads, in one-letter code: Protein GrpE (157 aa).

Basic and acidic residues predominate over residues 1-10; it reads MQEENQHPEQ. The tract at residues 1–21 is disordered; it reads MQEENQHPEQDDISEAQDAGA.

The protein belongs to the GrpE family. As to quaternary structure, homodimer.

The protein localises to the cytoplasm. In terms of biological role, participates actively in the response to hyperosmotic and heat shock by preventing the aggregation of stress-denatured proteins, in association with DnaK and GrpE. It is the nucleotide exchange factor for DnaK and may function as a thermosensor. Unfolded proteins bind initially to DnaJ; upon interaction with the DnaJ-bound protein, DnaK hydrolyzes its bound ATP, resulting in the formation of a stable complex. GrpE releases ADP from DnaK; ATP binding to DnaK triggers the release of the substrate protein, thus completing the reaction cycle. Several rounds of ATP-dependent interactions between DnaJ, DnaK and GrpE are required for fully efficient folding. The polypeptide is Protein GrpE (Methylovorus sp. (strain SS1 / DSM 11726)).